Here is a 246-residue protein sequence, read N- to C-terminus: ATP synthase subunit a (246 aa).

Positions 1–3 are cleaved as a propeptide — removed in mature form; sequence MFY. A run of 7 helical transmembrane segments spans residues 20–40, 56–76, 82–102, 112–132, 138–158, 176–196, and 203–223; these read ILTL…SIIF, WGVA…SQIG, FFPL…ISMI, LVAI…LGLY, FFAL…LVLI, ANIL…VNLM, and FIGG…EVGI.

This sequence belongs to the ATPase A chain family. As to quaternary structure, F-type ATPases have 2 components, CF(1) - the catalytic core - and CF(0) - the membrane proton channel. CF(1) has five subunits: alpha(3), beta(3), gamma(1), delta(1), epsilon(1). CF(0) has three main subunits: a, b and c.

Its subcellular location is the mitochondrion inner membrane. In terms of biological role, mitochondrial membrane ATP synthase (F(1)F(0) ATP synthase or Complex V) produces ATP from ADP in the presence of a proton gradient across the membrane which is generated by electron transport complexes of the respiratory chain. F-type ATPases consist of two structural domains, F(1) - containing the extramembraneous catalytic core and F(0) - containing the membrane proton channel, linked together by a central stalk and a peripheral stalk. During catalysis, ATP synthesis in the catalytic domain of F(1) is coupled via a rotary mechanism of the central stalk subunits to proton translocation. Key component of the proton channel; it may play a direct role in the translocation of protons across the membrane. This Candida albicans (strain SC5314 / ATCC MYA-2876) (Yeast) protein is ATP synthase subunit a (ATP6).